We begin with the raw amino-acid sequence, 224 residues long: MKLSFTKVSLTNILILFNCLFIIFSMIVLTFGVIPQIYLLKFANILHGVRPSIFPIVCFTGSFVIIVACVGIIGLMKGGKCLLTMHIIALIIATIIDISTATLSAIKQNEFLTKAGQVLNDSSKLYYKNRLYATEFDLMHITFKCCNVKNDYSLLGTLHLIPESCTHGIEFYKQQCNEPLNKYVRYYIDILIYLCFIFGFIKLIYSLFTFTQRQRIFSEKTPVA.

Topologically, residues 1-12 (MKLSFTKVSLTN) are cytoplasmic. A helical membrane pass occupies residues 13-33 (ILILFNCLFIIFSMIVLTFGV). The Extracellular segment spans residues 34–52 (IPQIYLLKFANILHGVRPS). A helical membrane pass occupies residues 53–73 (IFPIVCFTGSFVIIVACVGII). The Cytoplasmic portion of the chain corresponds to 74–80 (GLMKGGK). A helical membrane pass occupies residues 81–101 (CLLTMHIIALIIATIIDISTA). The Extracellular segment spans residues 102–189 (TLSAIKQNEF…LNKYVRYYID (88 aa)). The N-linked (GlcNAc...) asparagine glycan is linked to asparagine 120. Residues 190 to 210 (ILIYLCFIFGFIKLIYSLFTF) traverse the membrane as a helical segment. Over 211 to 224 (TQRQRIFSEKTPVA) the chain is Cytoplasmic.

This sequence belongs to the tetraspanin (TM4SF) family.

The protein localises to the membrane. This chain is 25 kDa integral membrane protein, found in Schistosoma japonicum (Blood fluke).